The following is a 453-amino-acid chain: tRNA modification GTPase MnmE (453 aa).

Residues R22, E79, and K119 each contribute to the (6S)-5-formyl-5,6,7,8-tetrahydrofolate site. Positions 215–376 (GMKVVIAGRP…LRNHLKECMG (162 aa)) constitute a TrmE-type G domain. N225 contacts K(+). GTP is bound by residues 225-230 (NAGKSS), 244-250 (TDIAGTT), 269-272 (DTAG), and 334-337 (NKAD). S229 lines the Mg(2+) pocket. Residues T244, I246, and T249 each contribute to the K(+) site. Residue T250 coordinates Mg(2+). K453 is a binding site for (6S)-5-formyl-5,6,7,8-tetrahydrofolate.

The protein belongs to the TRAFAC class TrmE-Era-EngA-EngB-Septin-like GTPase superfamily. TrmE GTPase family. Homodimer. Heterotetramer of two MnmE and two MnmG subunits. Requires K(+) as cofactor.

The protein resides in the cytoplasm. In terms of biological role, exhibits a very high intrinsic GTPase hydrolysis rate. Involved in the addition of a carboxymethylaminomethyl (cmnm) group at the wobble position (U34) of certain tRNAs, forming tRNA-cmnm(5)s(2)U34. The chain is tRNA modification GTPase MnmE from Vibrio vulnificus (strain YJ016).